Consider the following 465-residue polypeptide: ATP synthase subunit beta (465 aa).

155 to 162 contributes to the ATP binding site; it reads GGAGVGKT.

It belongs to the ATPase alpha/beta chains family. As to quaternary structure, F-type ATPases have 2 components, CF(1) - the catalytic core - and CF(0) - the membrane proton channel. CF(1) has five subunits: alpha(3), beta(3), gamma(1), delta(1), epsilon(1). CF(0) has three main subunits: a(1), b(2) and c(9-12). The alpha and beta chains form an alternating ring which encloses part of the gamma chain. CF(1) is attached to CF(0) by a central stalk formed by the gamma and epsilon chains, while a peripheral stalk is formed by the delta and b chains.

It is found in the cell membrane. The enzyme catalyses ATP + H2O + 4 H(+)(in) = ADP + phosphate + 5 H(+)(out). Its function is as follows. Produces ATP from ADP in the presence of a proton gradient across the membrane. The catalytic sites are hosted primarily by the beta subunits. In Buchnera aphidicola subsp. Acyrthosiphon pisum (strain 5A), this protein is ATP synthase subunit beta.